Consider the following 86-residue polypeptide: Small ribosomal subunit protein uS17 (86 aa).

This sequence belongs to the universal ribosomal protein uS17 family. In terms of assembly, part of the 30S ribosomal subunit.

Its function is as follows. One of the primary rRNA binding proteins, it binds specifically to the 5'-end of 16S ribosomal RNA. The sequence is that of Small ribosomal subunit protein uS17 from Roseiflexus castenholzii (strain DSM 13941 / HLO8).